The chain runs to 121 residues: Aspartate 1-decarboxylase (121 aa).

The active-site Schiff-base intermediate with substrate; via pyruvic acid is S25. Pyruvic acid (Ser) is present on S25. Substrate is bound at residue T57. Y58 acts as the Proton donor in catalysis. Substrate is bound at residue 73–75; sequence GAA.

Belongs to the PanD family. Heterooctamer of four alpha and four beta subunits. It depends on pyruvate as a cofactor. Post-translationally, is synthesized initially as an inactive proenzyme, which is activated by self-cleavage at a specific serine bond to produce a beta-subunit with a hydroxyl group at its C-terminus and an alpha-subunit with a pyruvoyl group at its N-terminus.

The protein resides in the cytoplasm. The catalysed reaction is L-aspartate + H(+) = beta-alanine + CO2. It participates in cofactor biosynthesis; (R)-pantothenate biosynthesis; beta-alanine from L-aspartate: step 1/1. In terms of biological role, catalyzes the pyruvoyl-dependent decarboxylation of aspartate to produce beta-alanine. The polypeptide is Aspartate 1-decarboxylase (Wolinella succinogenes (strain ATCC 29543 / DSM 1740 / CCUG 13145 / JCM 31913 / LMG 7466 / NCTC 11488 / FDC 602W) (Vibrio succinogenes)).